Consider the following 404-residue polypeptide: Glutamate-pyruvate aminotransferase AlaA (404 aa).

L-alanine contacts are provided by Gly41 and Asn179. The residue at position 240 (Lys240) is an N6-(pyridoxal phosphate)lysine. Arg378 contacts L-alanine.

The protein belongs to the class-I pyridoxal-phosphate-dependent aminotransferase family. In terms of assembly, homodimer. The cofactor is pyridoxal 5'-phosphate.

The enzyme catalyses L-alanine + 2-oxoglutarate = pyruvate + L-glutamate. Its pathway is amino-acid biosynthesis; L-alanine biosynthesis. Involved in the biosynthesis of alanine. Catalyzes the transamination of pyruvate by glutamate, leading to the formation of L-alanine and 2-oxoglutarate. Is also able to catalyze the reverse reaction. The sequence is that of Glutamate-pyruvate aminotransferase AlaA (alaA) from Haemophilus influenzae (strain ATCC 51907 / DSM 11121 / KW20 / Rd).